Here is a 199-residue protein sequence, read N- to C-terminus: Molybdenum cofactor guanylyltransferase (199 aa).

GTP-binding positions include 12 to 14, Lys-25, Asn-53, Asp-71, and Asp-101; that span reads LAG. Mg(2+) is bound at residue Asp-101.

It belongs to the MobA family. In terms of assembly, monomer. It depends on Mg(2+) as a cofactor.

The protein localises to the cytoplasm. It carries out the reaction Mo-molybdopterin + GTP + H(+) = Mo-molybdopterin guanine dinucleotide + diphosphate. Functionally, transfers a GMP moiety from GTP to Mo-molybdopterin (Mo-MPT) cofactor (Moco or molybdenum cofactor) to form Mo-molybdopterin guanine dinucleotide (Mo-MGD) cofactor. This Cupriavidus pinatubonensis (strain JMP 134 / LMG 1197) (Cupriavidus necator (strain JMP 134)) protein is Molybdenum cofactor guanylyltransferase.